The sequence spans 633 residues: Bifunctional enzyme CysN/CysC (633 aa).

The sulfate adenylyltransferase stretch occupies residues 1-463; it reads MSHQSDLISE…REERAGRFGQ (463 aa). The tr-type G domain maps to 22 to 241; sequence KELLRFLTCG…TVEIAADRNL (220 aa). Residues 31 to 38 are G1; that stretch reads GNVDDGKS. Residue 31-38 coordinates GTP; the sequence is GNVDDGKS. The G2 stretch occupies residues 89–93; sequence GITID. The tract at residues 110 to 113 is G3; sequence DTPG. Residues 110–114 and 165–168 each bind GTP; these read DTPGH and NKMD. A G4 region spans residues 165–168; the sequence is NKMD. Residues 204–206 are G5; that stretch reads SAL. The tract at residues 464-633 is adenylyl-sulfate kinase; that stretch reads QPATVLFSGL…LDLLRERQAI (170 aa). Position 472 to 479 (472 to 479) interacts with ATP; the sequence is GLSGAGKS.

It in the C-terminal section; belongs to the APS kinase family. The protein in the N-terminal section; belongs to the TRAFAC class translation factor GTPase superfamily. Classic translation factor GTPase family. CysN/NodQ subfamily. In terms of assembly, heterodimer composed of CysD, the smaller subunit, and CysNC.

It catalyses the reaction sulfate + ATP + H(+) = adenosine 5'-phosphosulfate + diphosphate. The enzyme catalyses adenosine 5'-phosphosulfate + ATP = 3'-phosphoadenylyl sulfate + ADP + H(+). It participates in sulfur metabolism; hydrogen sulfide biosynthesis; sulfite from sulfate: step 1/3. Its pathway is sulfur metabolism; hydrogen sulfide biosynthesis; sulfite from sulfate: step 2/3. Its function is as follows. With CysD forms the ATP sulfurylase (ATPS) that catalyzes the adenylation of sulfate producing adenosine 5'-phosphosulfate (APS) and diphosphate, the first enzymatic step in sulfur assimilation pathway. APS synthesis involves the formation of a high-energy phosphoric-sulfuric acid anhydride bond driven by GTP hydrolysis by CysN coupled to ATP hydrolysis by CysD. In terms of biological role, APS kinase catalyzes the synthesis of activated sulfate. The chain is Bifunctional enzyme CysN/CysC (cysNC) from Pseudomonas aeruginosa (strain ATCC 15692 / DSM 22644 / CIP 104116 / JCM 14847 / LMG 12228 / 1C / PRS 101 / PAO1).